Here is a 390-residue protein sequence, read N- to C-terminus: Galactokinase (390 aa).

Position 34-37 (34-37 (EHTD)) interacts with substrate. ATP-binding positions include serine 68 and 122 to 128 (GSGLSSS). Residues serine 128 and glutamate 160 each contribute to the Mg(2+) site. The Proton acceptor role is filled by aspartate 172. Tyrosine 221 is a binding site for substrate.

Belongs to the GHMP kinase family. GalK subfamily.

The protein localises to the cytoplasm. The enzyme catalyses alpha-D-galactose + ATP = alpha-D-galactose 1-phosphate + ADP + H(+). Its pathway is carbohydrate metabolism; galactose metabolism. Functionally, catalyzes the transfer of the gamma-phosphate of ATP to D-galactose to form alpha-D-galactose-1-phosphate (Gal-1-P). This Chloroflexus aggregans (strain MD-66 / DSM 9485) protein is Galactokinase.